The following is a 282-amino-acid chain: F-actin-capping protein subunit alpha (282 aa).

The protein belongs to the F-actin-capping protein alpha subunit family. In terms of assembly, component of the F-actin capping complex, composed of a heterodimer of an alpha and a beta subunit.

The protein localises to the cytoplasm. It is found in the cytoskeleton. In terms of biological role, F-actin-capping proteins bind in a Ca(2+)-independent manner to the fast growing ends of actin filaments (barbed end) thereby blocking the exchange of subunits at these ends. Unlike other capping proteins (such as gelsolin and severin), these proteins do not sever actin filaments. This Caenorhabditis elegans protein is F-actin-capping protein subunit alpha (cap-1).